The primary structure comprises 313 residues: UDP-glucose 4-epimerase (313 aa).

NAD(+) contacts are provided by residues 11–12, 31–36, 56–57, and 77–81; these read FI, DDLSSG, DI, and LAAQI. Substrate-binding residues include Ser121 and Tyr146. The NAD(+) site is built by Tyr146 and Lys150. Tyr146 functions as the Proton acceptor in the catalytic mechanism. Residues Asn175, 189–190, 204–206, Arg213, and 271–274 contribute to the substrate site; these read VV, KIF, and RLGD.

It belongs to the NAD(P)-dependent epimerase/dehydratase family. As to quaternary structure, homodimer. NAD(+) serves as cofactor.

It carries out the reaction UDP-alpha-D-glucose = UDP-alpha-D-galactose. It functions in the pathway carbohydrate metabolism; galactose metabolism. Functionally, involved in the metabolism of galactose. Catalyzes the conversion of UDP-galactose (UDP-Gal) to UDP-glucose (UDP-Glc) through a mechanism involving the transient reduction of NAD. This Mycolicibacterium smegmatis (strain ATCC 700084 / mc(2)155) (Mycobacterium smegmatis) protein is UDP-glucose 4-epimerase.